The sequence spans 83 residues: Small ribosomal subunit protein uS19m (83 aa).

The protein belongs to the universal ribosomal protein uS19 family.

It is found in the mitochondrion. The chain is Small ribosomal subunit protein uS19m (RPS19) from Tetraselmis subcordiformis (Marine green alga).